The sequence spans 431 residues: Ornithine decarboxylase (431 aa).

Residue K94 is modified to N6-(pyridoxal phosphate)lysine. Pyridoxal 5'-phosphate is bound by residues S226, G264, and 297-300; that span reads EPGR. 340 to 341 provides a ligand contact to substrate; it reads YD. C376 serves as the catalytic Proton donor; shared with dimeric partner. D377 lines the substrate pocket. Y405 serves as a coordination point for pyridoxal 5'-phosphate.

The protein belongs to the Orn/Lys/Arg decarboxylase class-II family. As to quaternary structure, homodimer. Only the dimer is catalytically active, as the active sites are constructed of residues from both monomers. Requires pyridoxal 5'-phosphate as cofactor.

The enzyme catalyses L-ornithine + H(+) = putrescine + CO2. Its pathway is amine and polyamine biosynthesis; putrescine biosynthesis via L-ornithine pathway; putrescine from L-ornithine: step 1/1. Inhibited by antizyme (AZ) in response to polyamine levels. AZ inhibits the assembly of the functional homodimer by binding to ODC monomers and targeting them for ubiquitin-independent proteolytic destruction by the 26S proteasome. Its function is as follows. Catalyzes the first and rate-limiting step of polyamine biosynthesis that converts ornithine into putrescine, which is the precursor for the polyamines, spermidine and spermine. Polyamines are essential for cell proliferation and are implicated in cellular processes, ranging from DNA replication to apoptosis. This is Ornithine decarboxylase from Datura stramonium (Jimsonweed).